Here is a 470-residue protein sequence, read N- to C-terminus: MEQQVLTVRDLVTAQSLGMKVLSGAGGLDRQVLWAHSCELSDPDRWLGPHELLMTVGLCVPHSAVEQRNFIVKLDEAGLSGVALGDHNSLPPLTRELYEEADRRSFPVLLTNQATPFAAIGRTVAAATATTQTMQVLKLSKLYQLSTYARTDPLRMMNDLQALLRAGLSVFDVQTGLTIVEGAPLEFMPTSVRERTYALPGDSDSRLMISEYPGEEVSSFLLIHVLQVIDVALSQLLRSLRRRSERSTQMLASIFEGRSPDGLGSILGPSGTSSGYQFVAVALEDSEKVARAASIKSLPVLAGPGSSSFFILMPEQSRNDVRNLLHGLDVRAGVSSTYLDLRDAKAAADEAAKIFSSGGTNGLWTDFTGVPVSLLTRSRKEASAIVQQVLGRLAGTDPKITVLRETLFAFLANDRRWNETAAALGIHRQTLSYRLTRIKEITGRDIASSADLSAFWLAFQAWPSFSDRSD.

As to quaternary structure, forms oligomers in solution, probably homotetramers.

It functions in the pathway alkaloid degradation; nicotine degradation [regulation]. Its function is as follows. Transcriptional regulator involved in the activation of the purU-mabO-folD-nepA-nepB and mao-ORF55-nbr operons implicated in the nicotine catabolic pathway. The sequence GTTT-14 bp-AAAC seems to be the core binding site of the regulator upstream of the -35 promoter region of the operon. The chain is Transcriptional activator PmfR (pmfR) from Paenarthrobacter nicotinovorans (Arthrobacter nicotinovorans).